Reading from the N-terminus, the 215-residue chain is Putative lipoprotein NMB1124/NMB1162 (215 aa).

The first 16 residues, methionine 1–alanine 16, serve as a signal peptide directing secretion. Cysteine 17 carries the N-palmitoyl cysteine lipid modification. Cysteine 17 carries S-diacylglycerol cysteine lipidation.

The protein resides in the cell membrane. This is Putative lipoprotein NMB1124/NMB1162 from Neisseria meningitidis serogroup B (strain ATCC BAA-335 / MC58).